The following is a 175-amino-acid chain: Large ribosomal subunit protein uL16 (175 aa).

Belongs to the universal ribosomal protein uL16 family.

In Caldivirga maquilingensis (strain ATCC 700844 / DSM 13496 / JCM 10307 / IC-167), this protein is Large ribosomal subunit protein uL16.